Here is a 161-residue protein sequence, read N- to C-terminus: Regulator of ribonuclease activity A (161 aa).

Belongs to the RraA family. In terms of assembly, homotrimer. Binds to both RNA-binding sites in the C-terminal region of Rne and to RhlB.

The protein resides in the cytoplasm. Functionally, globally modulates RNA abundance by binding to RNase E (Rne) and regulating its endonucleolytic activity. Can modulate Rne action in a substrate-dependent manner by altering the composition of the degradosome. Modulates RNA-binding and helicase activities of the degradosome. This is Regulator of ribonuclease activity A from Cronobacter sakazakii (strain ATCC BAA-894) (Enterobacter sakazakii).